Reading from the N-terminus, the 349-residue chain is 11-beta-hydroxysteroid dehydrogenase 1A (349 aa).

Residues 10–30 form a helical; Signal-anchor for type II membrane protein membrane-spanning segment; it reads LTAPFFTFFGLCFFLPPFYFF. NADP(+)-binding positions include 54–80 and Asp-105; that span reads GASS…TARR. A substrate-binding site is contributed by Ser-184. Tyr-197 serves as the catalytic Proton acceptor. Residues 197–201 and Lys-201 contribute to the NADP(+) site; that span reads YNASK.

It belongs to the short-chain dehydrogenases/reductases (SDR) family. In terms of tissue distribution, expressed in the above-ground part of seedlings, especially in the vascular tissues. Also detected in the buds and silique pedicels. Highly induced in oil-accumulating tissues of maturing seeds.

The protein resides in the lipid droplet. Its subcellular location is the membrane. It catalyses the reaction an 11beta-hydroxysteroid + NADP(+) = an 11-oxosteroid + NADPH + H(+). It carries out the reaction 17beta-estradiol + NADP(+) = estrone + NADPH + H(+). The catalysed reaction is corticosterone + NADP(+) = 11-dehydrocorticosterone + NADPH + H(+). The enzyme catalyses cortisone + NADPH + H(+) = cortisol + NADP(+). Catalyzes 11-beta, 17-beta-hydroxysteroid and reduces 17-beta-ketosteroids. Involved in regulating plant growth and development, probably promoting or mediating brassinosteroid effects. Plays a role during seed maturation. In Arabidopsis thaliana (Mouse-ear cress), this protein is 11-beta-hydroxysteroid dehydrogenase 1A (HSD1).